The following is a 309-amino-acid chain: MPIRVPDELPAVSFLRNENVFVMASSRAKTQEIRPLKVLILNLMPKKIETENQFLRLLSNSPLQVDIQLLRVDSRESKNTPTEHLNNFYCDFEDIQDQNFDGLIVTGAPLGLVDFCDVAYWPQIERIIAWAKEHVTSTLFVCWAVQAALNILYGIPKMTREVKLSGIYQHQTLEPLALLTRGFDETFLAPHSRYADFPVEVLQQYTDLDILVSSEEAGAYLFASKDKRVAFVTGHPEYDVDTLAGEYQRDLAAGLNPQVPLNYFPSDDASLRPKASWRSHGHLLFANWLNYYVYQITPFDLRHMNPTLD.

Residue Cys142 is the Acyl-thioester intermediate of the active site. Lys163 and Ser192 together coordinate substrate. Residue His235 is the Proton acceptor of the active site. The active site involves Glu237. Arg249 is a substrate binding site.

Belongs to the MetA family.

The protein localises to the cytoplasm. It catalyses the reaction L-homoserine + succinyl-CoA = O-succinyl-L-homoserine + CoA. It participates in amino-acid biosynthesis; L-methionine biosynthesis via de novo pathway; O-succinyl-L-homoserine from L-homoserine: step 1/1. Functionally, transfers a succinyl group from succinyl-CoA to L-homoserine, forming succinyl-L-homoserine. The sequence is that of Homoserine O-succinyltransferase from Yersinia pseudotuberculosis serotype O:1b (strain IP 31758).